The sequence spans 190 residues: Glutathione peroxidase 2 (190 aa).

Residue Sec-40 is part of the active site. Sec-40 is a non-standard amino acid (selenocysteine).

Belongs to the glutathione peroxidase family. In terms of assembly, homotetramer.

The protein resides in the cytoplasm. Its subcellular location is the cytosol. It carries out the reaction 2 glutathione + H2O2 = glutathione disulfide + 2 H2O. The catalysed reaction is a hydroperoxy polyunsaturated fatty acid + 2 glutathione = a hydroxy polyunsaturated fatty acid + glutathione disulfide + H2O. The enzyme catalyses tert-butyl hydroperoxide + 2 glutathione = tert-butanol + glutathione disulfide + H2O. It catalyses the reaction cumene hydroperoxide + 2 glutathione = 2-phenylpropan-2-ol + glutathione disulfide + H2O. It carries out the reaction (13S)-hydroperoxy-(9Z,11E)-octadecadienoate + 2 glutathione = (13S)-hydroxy-(9Z,11E)-octadecadienoate + glutathione disulfide + H2O. The catalysed reaction is (5S)-hydroperoxy-(6E,8Z,11Z,14Z)-eicosatetraenoate + 2 glutathione = (5S)-hydroxy-(6E,8Z,11Z,14Z)-eicosatetraenoate + glutathione disulfide + H2O. The enzyme catalyses (12R)-hydroperoxy-(5Z,8Z,10E,14Z)-eicosatetraenoate + 2 glutathione = (12R)-hydroxy-(5Z,8Z,10E,14Z)-eicosatetraenoate + glutathione disulfide + H2O. It catalyses the reaction (15S)-hydroperoxy-(5Z,8Z,11Z,13E)-eicosatetraenoate + 2 glutathione = (15S)-hydroxy-(5Z,8Z,11Z,13E)-eicosatetraenoate + glutathione disulfide + H2O. Functionally, catalyzes the reduction of hydroperoxides in a glutathione-dependent manner thus regulating cellular redox homeostasis. Can reduce small soluble hydroperoxides such as H2O2, cumene hydroperoxide and tert-butyl hydroperoxide, as well as several fatty acid-derived hydroperoxides. Cannot reduce phosphatidycholine hydroperoxide. This chain is Glutathione peroxidase 2 (GPX2), found in Callithrix jacchus (White-tufted-ear marmoset).